The primary structure comprises 539 residues: Phosphoenolpyruvate carboxykinase (ATP) (539 aa).

Substrate-binding residues include Arg64, Tyr206, and Lys212. Residues Lys212, His231, and Gly247–Thr255 contribute to the ATP site. Mn(2+) is bound by residues Lys212 and His231. Asp268 contacts Mn(2+). ATP contacts are provided by residues Glu296, Arg332, Arg448 to Ile449, and Thr454. Arg332 is a substrate binding site.

It belongs to the phosphoenolpyruvate carboxykinase (ATP) family. Monomer. Mn(2+) is required as a cofactor.

It localises to the cytoplasm. The catalysed reaction is oxaloacetate + ATP = phosphoenolpyruvate + ADP + CO2. It functions in the pathway carbohydrate biosynthesis; gluconeogenesis. In terms of biological role, involved in the gluconeogenesis. Catalyzes the conversion of oxaloacetate (OAA) to phosphoenolpyruvate (PEP) through direct phosphoryl transfer between the nucleoside triphosphate and OAA. The polypeptide is Phosphoenolpyruvate carboxykinase (ATP) (Hamiltonella defensa subsp. Acyrthosiphon pisum (strain 5AT)).